The chain runs to 166 residues: Photosystem I assembly protein Ycf3 (166 aa).

TPR repeat units lie at residues 35–68, 72–105, and 120–153; these read AFTY…EIDA, SYML…NPRL, and GEQA…SPTS.

The protein belongs to the Ycf3 family.

The protein localises to the plastid. The protein resides in the chloroplast thylakoid membrane. Its function is as follows. Essential for the assembly of the photosystem I (PSI) complex. May act as a chaperone-like factor to guide the assembly of the PSI subunits. In Bigelowiella natans (Pedinomonas minutissima), this protein is Photosystem I assembly protein Ycf3.